Here is a 622-residue protein sequence, read N- to C-terminus: Dehydrogenase mpl7 (622 aa).

FAD is bound by residues 23–24 (TA), 44–45 (EA), and 102–105 (NFMS). The active-site Proton acceptor is the histidine 554. FAD is bound by residues alanine 582 and 593–594 (IM).

This sequence belongs to the GMC oxidoreductase family. In terms of assembly, homodimer. It depends on FAD as a cofactor.

It participates in mycotoxin biosynthesis. Its function is as follows. Dehydrogenase; part of the gene cluster that mediates the biosynthesis of the mycotoxin citrinin, a hepato-nephrotoxic compound to humans due to inhibition of respiration complex III. The pathway begins with the synthesis of a keto-aldehyde intermediate by the citrinin PKS (pksCT) from successive condensations of 4 malonyl-CoA units, presumably with a simple acetyl-CoA starter unit. Release of the keto-aldehyde intermediate is consistent with the presence of the C-terminal reductive release domain. Mp11 collaborates with pksCT by catalyzing the hydrolysis of ACP-bound acyl intermediates to free the ACP from stalled intermediates. Mpl2 then catalyzes the oxidation of the C-12 methyl of the ketone intermediate to an alcohol intermediate which is further oxidized by the oxidoreductase mpl7 to produce a bisaldehyde intermediate. The fourth catalytic step is catalyzed by the mpl4 aldehyde dehydrogenase. The final transformation is the reduction of C-3 by mpl6 to provide the chemically stable citrinin nucleus. In Monascus purpureus (Red mold), this protein is Dehydrogenase mpl7.